The primary structure comprises 1452 residues: Pleiotropic drug resistance protein 1 (1452 aa).

The region spanning 152-425 (LNYLHILPNR…FEYMGFICPE (274 aa)) is the ABC transporter 1 domain. 185–192 (GPPSSGKT) lines the ATP pocket. One can recognise an ABC transmembrane type-2 1 domain in the interval 504–716 (LLKACTAREY…AQNAIAVNEF (213 aa)). The next 7 helical transmembrane spans lie at 521–541 (FVYI…MTLF), 554–574 (GAVF…NGFS), 609–629 (IPIT…VIGF), 640–660 (LLLL…MGAL), 664–684 (IIVA…MGGF), 694–714 (WWIW…IAVN), and 753–773 (IGAG…AVAL). The interval 808–830 (LGKSSSEKGNDVRRSASSRSMSS) is disordered. Basic and acidic residues predominate over residues 812 to 821 (SSEKGNDVRR). An ABC transporter 2 domain is found at 855-1107 (ITFDDIRYAV…HLIKYFEGID (253 aa)). 900–907 (GVSGAGKT) lines the ATP pocket. An ABC transmembrane type-2 2 domain is found at 1180-1394 (TQCMACFWKQ…TLYGLIASQF (215 aa)). A run of 7 helical transmembrane segments spans residues 1199 to 1219 (YTAV…TIFW), 1239 to 1259 (YIAV…VIAI), 1287 to 1307 (LPYL…MIGF), 1314 to 1334 (FFWY…YGMM), 1344 to 1364 (IAAI…GFIV), 1375 to 1395 (WYYY…SQFG), and 1421 to 1441 (FVGY…FIFA).

This sequence belongs to the ABC transporter superfamily. ABCG family. PDR (TC 3.A.1.205) subfamily. As to expression, expressed in root hypodermal passage cells. Expressed in stem tissues, particularly the vasculature and nodes adjacent to leaf axils.

Its subcellular location is the cell membrane. Functionally, cellular strigolactone (SL) transporter required for the exudation of SL from the root to the soil. The presence of SL in the vicinity of the roots is required for development of symbiotic interactions with arbuscular mycorrhizal fungi (AMF). Transports SL in the above ground tissues and is required for the control of shoot branching. SL regulates plant shoot architecture by inhibiting the outgrowth of axillary buds. Involved in the regulation of shootward and outward directional strigolactone transport in roots. Due to its polar localization in root cells, mediates directional shootward strigolactone transport, as well as localized outward directional transport for exudation to the soil. The chain is Pleiotropic drug resistance protein 1 from Petunia axillaris (Large white petunia).